The sequence spans 313 residues: Protein FixB (313 aa).

255-283 (LYLAVGISGQIQHMVGANASQTIFAINKD) lines the FAD pocket.

The protein belongs to the ETF alpha-subunit/FixB family. As to quaternary structure, heterodimer of FixA and FixB.

It participates in amine and polyamine metabolism; carnitine metabolism. Its function is as follows. Required for anaerobic carnitine reduction. May bring reductant to CaiA. This is Protein FixB from Shigella dysenteriae serotype 1 (strain Sd197).